The primary structure comprises 153 residues: Histone H2A (153 aa).

Disordered regions lie at residues M1–S27 and K131–A153. Residues A132–T147 are compositionally biased toward low complexity. Residues S149–K152 carry the SPKK motif motif.

This sequence belongs to the histone H2A family. The nucleosome is a histone octamer containing two molecules each of H2A, H2B, H3 and H4 assembled in one H3-H4 heterotetramer and two H2A-H2B heterodimers. The octamer wraps approximately 147 bp of DNA.

The protein localises to the nucleus. The protein resides in the chromosome. Functionally, core component of nucleosome. Nucleosomes wrap and compact DNA into chromatin, limiting DNA accessibility to the cellular machineries which require DNA as a template. Histones thereby play a central role in transcription regulation, DNA repair, DNA replication and chromosomal stability. DNA accessibility is regulated via a complex set of post-translational modifications of histones, also called histone code, and nucleosome remodeling. The sequence is that of Histone H2A from Euphorbia esula (Leafy spurge).